A 513-amino-acid polypeptide reads, in one-letter code: Calcium-dependent protein kinase 24 (513 aa).

A disordered region spans residues 1–33 (MQPDPSGSGGDGNANAKAKLAPPPVTAAGGRPV). Residues 47–305 (YRIGKKLGQG…AHEVLCHPWI (259 aa)) enclose the Protein kinase domain. ATP is bound by residues 53–61 (LGQGQFGTT) and K76. Catalysis depends on D171, which acts as the Proton acceptor. The tract at residues 311–341 (APDKPIDSAVLSRLKHFSAMNKLKKMALRVI) is autoinhibitory domain. 4 consecutive EF-hand domains span residues 348 to 383 (EEIG…VGSE), 384 to 419 (LTEH…MNKL), 420 to 455 (EREE…FGLD), and 458 to 489 (HLED…GNAG). The Ca(2+) site is built by D361, D363, S365, T367, E372, D397, D399, S401, T403, E408, D433, D435, S437, E444, D467, N469, D471, Q473, and E478.

The protein belongs to the protein kinase superfamily. Ser/Thr protein kinase family. CDPK subfamily. Expressed in roots.

The protein resides in the cytoplasm. It carries out the reaction L-seryl-[protein] + ATP = O-phospho-L-seryl-[protein] + ADP + H(+). The catalysed reaction is L-threonyl-[protein] + ATP = O-phospho-L-threonyl-[protein] + ADP + H(+). Activated by calcium. Autophosphorylation may play an important role in the regulation of the kinase activity. In terms of biological role, may play a role in signal transduction pathways that involve calcium as a second messenger. Possesses calcium-dependent protein kinase activity in vitro. The sequence is that of Calcium-dependent protein kinase 24 from Oryza sativa subsp. japonica (Rice).